The chain runs to 122 residues: Large ribosomal subunit protein bL12 (122 aa).

It belongs to the bacterial ribosomal protein bL12 family. Homodimer. Part of the ribosomal stalk of the 50S ribosomal subunit. Forms a multimeric L10(L12)X complex, where L10 forms an elongated spine to which 2 to 4 L12 dimers bind in a sequential fashion. Binds GTP-bound translation factors.

In terms of biological role, forms part of the ribosomal stalk which helps the ribosome interact with GTP-bound translation factors. Is thus essential for accurate translation. In Shewanella putrefaciens (strain CN-32 / ATCC BAA-453), this protein is Large ribosomal subunit protein bL12.